Here is a 354-residue protein sequence, read N- to C-terminus: Histidinol-phosphate aminotransferase (354 aa).

At Lys210 the chain carries N6-(pyridoxal phosphate)lysine.

This sequence belongs to the class-II pyridoxal-phosphate-dependent aminotransferase family. Histidinol-phosphate aminotransferase subfamily. As to quaternary structure, homodimer. Requires pyridoxal 5'-phosphate as cofactor.

The catalysed reaction is L-histidinol phosphate + 2-oxoglutarate = 3-(imidazol-4-yl)-2-oxopropyl phosphate + L-glutamate. The protein operates within amino-acid biosynthesis; L-histidine biosynthesis; L-histidine from 5-phospho-alpha-D-ribose 1-diphosphate: step 7/9. This is Histidinol-phosphate aminotransferase from Clostridium botulinum (strain Langeland / NCTC 10281 / Type F).